The sequence spans 315 residues: Methionyl-tRNA formyltransferase (315 aa).

A (6S)-5,6,7,8-tetrahydrofolate-binding site is contributed by 113 to 116 (SLLP).

The protein belongs to the Fmt family.

The catalysed reaction is L-methionyl-tRNA(fMet) + (6R)-10-formyltetrahydrofolate = N-formyl-L-methionyl-tRNA(fMet) + (6S)-5,6,7,8-tetrahydrofolate + H(+). Its function is as follows. Attaches a formyl group to the free amino group of methionyl-tRNA(fMet). The formyl group appears to play a dual role in the initiator identity of N-formylmethionyl-tRNA by promoting its recognition by IF2 and preventing the misappropriation of this tRNA by the elongation apparatus. The chain is Methionyl-tRNA formyltransferase from Escherichia coli (strain SMS-3-5 / SECEC).